The sequence spans 155 residues: MAEQQAQPEQVEFNIQRVYVKDISFECPGSPNIFKKEWSPEVSMDIDTKSQKLEDNVFEVVLTLTTTAKVGEELAFLCEVQQAGIFSVGNLEGEQMAHCLNAFCPNILFPYARETVSSLVTRGTFPQLNLAPVNFDALFQQAVLRKQSEEAKLNS.

Belongs to the SecB family. Homotetramer, a dimer of dimers. One homotetramer interacts with 1 SecA dimer.

The protein localises to the cytoplasm. Functionally, one of the proteins required for the normal export of preproteins out of the cell cytoplasm. It is a molecular chaperone that binds to a subset of precursor proteins, maintaining them in a translocation-competent state. It also specifically binds to its receptor SecA. The chain is Protein-export protein SecB from Psychromonas ingrahamii (strain DSM 17664 / CCUG 51855 / 37).